The primary structure comprises 67 residues: Conotoxin VnMMSK-02 (67 aa).

The N-terminal stretch at 1-20 (MMSKLGALLTICLLLFPLTA) is a signal peptide. Positions 21–52 (LPLDGDQPADRPAERMQDDISSEQHPLFDKER) are excised as a propeptide. Gln53 is modified (pyrrolidone carboxylic acid). Intrachain disulfides connect Cys54/Cys66, Cys55/Cys62, and Cys59/Cys65. The residue at position 64 (Pro64) is a 4-hydroxyproline. Cys66 carries the post-translational modification Cysteine amide.

It belongs to the conotoxin M superfamily. In terms of tissue distribution, expressed by the venom duct.

The protein localises to the secreted. The polypeptide is Conotoxin VnMMSK-02 (Conus ventricosus (Mediterranean cone)).